Reading from the N-terminus, the 197-residue chain is MEVNHVELVMSAVDPAQYPTTGYPEIALVGRSNVGKSSLTNVLINRNSYARTSSQPGKTQTLNFYNVEDQLYFVDVPGYGYAKVSKTEREKWGQMIETYLTQRDQLRGVISLVDARHAPTEDDIQMYRWLAYYELPTLIVATKSDKIARGKWNQAVSQIKKSLELPNTDNIVMFSAPKKMGKDAVWNWIEAQAFGGE.

One can recognise an EngB-type G domain in the interval 22 to 195 (GYPEIALVGR…WNWIEAQAFG (174 aa)). GTP contacts are provided by residues 30 to 37 (GRSNVGKS), 57 to 61 (GKTQT), 75 to 78 (DVPG), 142 to 145 (TKSD), and 174 to 176 (FSA). Mg(2+)-binding residues include serine 37 and threonine 59.

It belongs to the TRAFAC class TrmE-Era-EngA-EngB-Septin-like GTPase superfamily. EngB GTPase family. The cofactor is Mg(2+).

In terms of biological role, necessary for normal cell division and for the maintenance of normal septation. This is Probable GTP-binding protein EngB from Levilactobacillus brevis (strain ATCC 367 / BCRC 12310 / CIP 105137 / JCM 1170 / LMG 11437 / NCIMB 947 / NCTC 947) (Lactobacillus brevis).